We begin with the raw amino-acid sequence, 801 residues long: Zinc finger Y-chromosomal protein (801 aa).

Ser270 carries the post-translational modification Phosphoserine. The segment at 421 to 443 (YPCMICGKKFKSRGFLKRHMKNH) adopts a C2H2-type 1 zinc-finger fold. The C2H2-type 2; atypical zinc-finger motif lies at 452-474 (YHCTDCDYTTNKKISLHNHLESH). 11 consecutive C2H2-type zinc fingers follow at residues 484–506 (IECD…KMVH), 515–538 (HKCK…LAVH), 544–566 (HICV…MRIH), 572–595 (YQCQ…KTKH), 601–623 (FKCD…TLVH), 629–652 (HQCL…ISVH), 658–680 (HKCE…VAVH), 686–709 (HQCR…LSVH), 715–737 (FRCK…MKTH), 743–766 (YQCE…ISIH), and 772–795 (HRCE…MRHH).

Belongs to the krueppel C2H2-type zinc-finger protein family. ZFX/ZFY subfamily.

The protein localises to the nucleus. Its function is as follows. Probable transcriptional activator. Binds to the consensus sequence 5'-AGGCCY-3'. In Homo sapiens (Human), this protein is Zinc finger Y-chromosomal protein (ZFY).